The chain runs to 474 residues: uncharacterized protein (474 aa).

Residues 374 to 398 traverse the membrane as a helical segment; it reads GLICYLALFSISLMIENIIGLTISL.

The protein localises to the membrane. This is an uncharacterized protein from Borreliella burgdorferi (strain ATCC 35210 / DSM 4680 / CIP 102532 / B31) (Borrelia burgdorferi).